The following is a 230-amino-acid chain: Demethylmenaquinone methyltransferase (230 aa).

Residues T62, D80, 100-101, and S117 contribute to the S-adenosyl-L-methionine site; that span reads DG.

The protein belongs to the class I-like SAM-binding methyltransferase superfamily. MenG/UbiE family.

The enzyme catalyses a 2-demethylmenaquinol + S-adenosyl-L-methionine = a menaquinol + S-adenosyl-L-homocysteine + H(+). It functions in the pathway quinol/quinone metabolism; menaquinone biosynthesis; menaquinol from 1,4-dihydroxy-2-naphthoate: step 2/2. In terms of biological role, methyltransferase required for the conversion of demethylmenaquinol (DMKH2) to menaquinol (MKH2). The sequence is that of Demethylmenaquinone methyltransferase from Corynebacterium glutamicum (strain ATCC 13032 / DSM 20300 / JCM 1318 / BCRC 11384 / CCUG 27702 / LMG 3730 / NBRC 12168 / NCIMB 10025 / NRRL B-2784 / 534).